The primary structure comprises 319 residues: tRNA (guanine-N(7)-)-methyltransferase (319 aa).

S-adenosyl-L-methionine contacts are provided by Glu28, Glu51, and Asp75. Substrate is bound by residues Asp134 and 167 to 170; that span reads TKYE.

It belongs to the class I-like SAM-binding methyltransferase superfamily. TrmB family.

The catalysed reaction is guanosine(46) in tRNA + S-adenosyl-L-methionine = N(7)-methylguanosine(46) in tRNA + S-adenosyl-L-homocysteine. Its pathway is tRNA modification; N(7)-methylguanine-tRNA biosynthesis. Functionally, catalyzes the formation of N(7)-methylguanine at position 46 (m7G46) in tRNA. The protein is tRNA (guanine-N(7)-)-methyltransferase of Coprothermobacter proteolyticus (strain ATCC 35245 / DSM 5265 / OCM 4 / BT).